The primary structure comprises 132 residues: Small ribosomal subunit protein uS8c (132 aa).

This sequence belongs to the universal ribosomal protein uS8 family. Part of the 30S ribosomal subunit.

The protein localises to the plastid. Its subcellular location is the chloroplast. Functionally, one of the primary rRNA binding proteins, it binds directly to 16S rRNA central domain where it helps coordinate assembly of the platform of the 30S subunit. The chain is Small ribosomal subunit protein uS8c (rps8) from Staurastrum punctulatum (Green alga).